Reading from the N-terminus, the 123-residue chain is MALTNEEILNAVAEKTVLELVELISAFEEKFNVSAAAVAVAAPAGGAAAAAEEQSEFNVELTSFGANKVAVIKAVREATGLGLKEAKDLVEGAPQVLKEGVSKEEGEELKKKLEEAGATVTLK.

The protein belongs to the bacterial ribosomal protein bL12 family. Homodimer. Part of the ribosomal stalk of the 50S ribosomal subunit. Forms a multimeric L10(L12)X complex, where L10 forms an elongated spine to which 2 to 4 L12 dimers bind in a sequential fashion. Binds GTP-bound translation factors.

Forms part of the ribosomal stalk which helps the ribosome interact with GTP-bound translation factors. Is thus essential for accurate translation. This Acinetobacter baumannii (strain AB307-0294) protein is Large ribosomal subunit protein bL12.